The chain runs to 836 residues: Probable RING finger protein 207 homolog (836 aa).

The RING-type zinc-finger motif lies at 8–42 (CTICKNDFEEPILFSCQHTTCRKCSNGSPSCKTCS). Residues 68 to 115 (EEMEQCANCEQITLPMFYCETCQQSLCLACRNVTHQARMFSSHKIISS) form a B box-type 1; atypical zinc finger. Residues cysteine 73, cysteine 76, cysteine 97, and histidine 102 each coordinate Zn(2+). The B box-type 2; degenerate zinc finger occupies 122 to 164 (YSSSLCKDHNEPYILYCSDVRKLVCIQCFNGRPLEERHSFISI). A coiled-coil region spans residues 527 to 557 (QNRIMAIEKEEENRRLNQEAKKKEELAGQSA). Positions 540 to 552 (RRLNQEAKKKEEL) are enriched in basic and acidic residues. A disordered region spans residues 540 to 571 (RRLNQEAKKKEELAGQSAAMKSLKHGKTKRKE). Over residues 561–571 (SLKHGKTKRKE) the composition is skewed to basic residues.

This is Probable RING finger protein 207 homolog from Caenorhabditis briggsae.